The chain runs to 296 residues: Cytidine deaminase (296 aa).

2 CMP/dCMP-type deaminase domains span residues 47-167 and 186-296; these read ELNE…FGPS and DSND…VEPE. 88–90 provides a ligand contact to substrate; sequence NIE. H101 is a binding site for Zn(2+). E103 acts as the Proton donor in catalysis. 2 residues coordinate Zn(2+): C128 and C131.

Belongs to the cytidine and deoxycytidylate deaminase family. Homodimer. It depends on Zn(2+) as a cofactor.

It carries out the reaction cytidine + H2O + H(+) = uridine + NH4(+). The catalysed reaction is 2'-deoxycytidine + H2O + H(+) = 2'-deoxyuridine + NH4(+). This enzyme scavenges exogenous and endogenous cytidine and 2'-deoxycytidine for UMP synthesis. The sequence is that of Cytidine deaminase from Shewanella halifaxensis (strain HAW-EB4).